The sequence spans 115 residues: ESX-1 secretion-associated protein EspL (115 aa).

This Mycobacterium tuberculosis (strain CDC 1551 / Oshkosh) protein is ESX-1 secretion-associated protein EspL.